Reading from the N-terminus, the 433-residue chain is Dihydroorotase (433 aa).

Zn(2+) contacts are provided by His63 and His65. Substrate is bound by residues His65–Arg67 and Asn97. Zn(2+) contacts are provided by Asp155, His182, and His235. Substrate is bound at residue Asn283. Asp310 contributes to the Zn(2+) binding site. Residue Asp310 is part of the active site. His314 lines the substrate pocket.

The protein belongs to the metallo-dependent hydrolases superfamily. DHOase family. Class I DHOase subfamily. Zn(2+) is required as a cofactor.

It catalyses the reaction (S)-dihydroorotate + H2O = N-carbamoyl-L-aspartate + H(+). It functions in the pathway pyrimidine metabolism; UMP biosynthesis via de novo pathway; (S)-dihydroorotate from bicarbonate: step 3/3. Functionally, catalyzes the reversible cyclization of carbamoyl aspartate to dihydroorotate. The protein is Dihydroorotase of Anaeromyxobacter dehalogenans (strain 2CP-C).